A 665-amino-acid chain; its full sequence is PR5-like receptor kinase (665 aa).

The first 24 residues, 1 to 24, serve as a signal peptide directing secretion; sequence MVEGFSLSLMFLLVSHFFVSGVMS. Over 25–276 the chain is Extracellular; it reads RNFTIENKCD…TKQKSSWKLK (252 aa). Residues Asn26 and Asn88 are each glycosylated (N-linked (GlcNAc...) asparagine). 8 disulfides stabilise this stretch: Cys33–Cys249, Cys81–Cys91, Cys96–Cys103, Cys153–Cys238, Cys158–Cys221, Cys166–Cys184, Cys188–Cys197, and Cys198–Cys208. Asn163 is a glycosylation site (N-linked (GlcNAc...) asparagine). The N-linked (GlcNAc...) asparagine glycan is linked to Asn233. The chain crosses the membrane as a helical span at residues 277 to 297; that stretch reads LIVGVSAALTLMILIVVVIIV. Residues 298 to 665 lie on the Cytoplasmic side of the membrane; that stretch reads RTKNMRNSEW…DVLQHGSRSS (368 aa). The Protein kinase domain maps to 331 to 620; the sequence is NSFAHVLGKG…ALQVPPNPLL (290 aa). ATP is bound by residues 337–345 and Lys360; that span reads LGKGGFGTV. Residue Asp455 is the Proton acceptor of the active site.

The protein in the N-terminal section; belongs to the thaumatin family. In the C-terminal section; belongs to the protein kinase superfamily. Ser/Thr protein kinase family. Autophosphorylated in vitro. Expressed in roots. Expressed at low levels in stems.

The protein resides in the membrane. The enzyme catalyses L-seryl-[protein] + ATP = O-phospho-L-seryl-[protein] + ADP + H(+). The catalysed reaction is L-threonyl-[protein] + ATP = O-phospho-L-threonyl-[protein] + ADP + H(+). Functionally, possesses kinase activity in vitro. The protein is PR5-like receptor kinase of Arabidopsis thaliana (Mouse-ear cress).